Here is a 695-residue protein sequence, read N- to C-terminus: MELGSCFKTYEDFKECFSAYKKETRCSFIVRDCISVRFHNLNNGTSFREDILYVQVKFVCIRTQSNRKKTRKVDRCPAYLLLQYNETLDRLFISELNTQHIHADSNASGGIPASKPQAICLHKLPPVQLSIRKDLDTAEKPSVEPSFCLDKIHKPSNPEQEGISPSDMAKIAKVMKNFLTVDEGSMASFSVGTSQDLDRLSFQSSKMSDLFARFPETLLLHRVENSQGHILYAFLVENKERESRVVHFAVLKAETAPSVAKMLNIFTEFNSDWPKVKMVFVDPSFPHRAILQEIFPSARTLLSIYHTTRLLEKKLHQSSVNASFKRLMKEALREAVFVSSDASLKNLCEMSQVLLDEELFSFLQAHWFSCELLWYIHVRKGLHACNTYMDSLDIVTSKVSSLFREQRSLLDCILHFVDYIDFFNTKGLKSLPTNAPKLRRTRLPSTPPRPKKPFRICGGGDTRLPVEEVEETKADSAQSQLPQPQDQSSKAGMLDILHQSGSELAYKLCHNEWEVVQNSTHLVDEAGSSVAVQLLENSHQVSKDGCSCSCSFQQCYHLPCRHILALLHTSQQPVGEAMVCCRWQKKYQHLLDPNGELQDRGIIPNTDQPEKQGQNHMIRDLSRELANLLMQTEGPELEERCSTLRKIVDIWADPYQLPESSQQPVDFRDVGCLPFLWGKLEEADSPPLAEAMVHD.

Positions 434–490 are disordered; that stretch reads NAPKLRRTRLPSTPPRPKKPFRICGGGDTRLPVEEVEETKADSAQSQLPQPQDQSSK. Residues 475 to 489 show a composition bias toward low complexity; the sequence is DSAQSQLPQPQDQSS. The SWIM-type zinc finger occupies 530 to 571; that stretch reads VAVQLLENSHQVSKDGCSCSCSFQQCYHLPCRHILALLHTSQ.

This chain is Zinc finger SWIM domain-containing protein 3 (Zswim3), found in Mus musculus (Mouse).